A 359-amino-acid polypeptide reads, in one-letter code: Fc receptor-like A (359 aa).

An N-terminal signal peptide occupies residues 1-27 (MKLGCVLMAWALYLSLGVLWVAQMLLA). 2 Ig-like C2-type domains span residues 70 to 159 (PFHL…ETAS) and 170 to 257 (PAPI…PQLE). 2 disulfides stabilise this stretch: Cys-99–Cys-143 and Cys-192–Cys-240. The interval 259–313 (RVQGASSSAAPPTLNPAPQKSAAPGTAPEEAPGPLPPPPTPSSEDPGFSSPLGMP) is disordered. The segment covering 279-288 (SAAPGTAPEE) has biased composition (low complexity). The span at 289 to 299 (APGPLPPPPTP) shows a compositional bias: pro residues.

In terms of assembly, monomer or homodimer; disulfide-linked. In terms of tissue distribution, expressed specifically in primary and secondary lymphoid tissues like lymph node, spleen and tonsil. Specifically expressed in B-cells with a high level in normal germinal center B-cells, centroblasts and in a subset of diffuse large B-cell lymphomas. Highly expressed in bone marrow B-cells and weakly in earlier B lineage cells. Expressed in pre-germinal and germinal center B-cells in secondary lymphoid tissues. Also expressed in melanoma and melanocytes.

The protein resides in the cytoplasm. Its function is as follows. May be implicated in B-cell differentiation and lymphomagenesis. The protein is Fc receptor-like A (FCRLA) of Homo sapiens (Human).